Here is a 745-residue protein sequence, read N- to C-terminus: VCP-like ATPase (745 aa).

Residues 231-238 (GPPGTGKT) and 508-515 (GPPGVGKT) contribute to the ATP site.

The protein belongs to the AAA ATPase family. CDC48 subfamily. Homohexamer. Forms a ring-shaped particle.

The protein is VCP-like ATPase (vat) of Thermoplasma acidophilum (strain ATCC 25905 / DSM 1728 / JCM 9062 / NBRC 15155 / AMRC-C165).